Consider the following 236-residue polypeptide: MNSLSYLNHAQQAFPPPEQALIEPNGLLAVGGDLHPERLLNAYYNGIFPWFNLDDPILWWSPDPRAVFVPGNMKISRSLVKYLKKQNWTYTINHAFEAVTAGCAEPRAGQDGTWISSEIQQAYLSLHHQGHAHSLEVWQNNELIGGLYGLAIGQVFCGESMFHRTTNASKAAMIVLQQHLQRCGFKLIDAQVVNPHLDSLGAKSIKRDDFLRLLAHLRDGTVSLDSWRKSEVTIEL.

Belongs to the L/F-transferase family.

It localises to the cytoplasm. The enzyme catalyses N-terminal L-lysyl-[protein] + L-leucyl-tRNA(Leu) = N-terminal L-leucyl-L-lysyl-[protein] + tRNA(Leu) + H(+). It carries out the reaction N-terminal L-arginyl-[protein] + L-leucyl-tRNA(Leu) = N-terminal L-leucyl-L-arginyl-[protein] + tRNA(Leu) + H(+). It catalyses the reaction L-phenylalanyl-tRNA(Phe) + an N-terminal L-alpha-aminoacyl-[protein] = an N-terminal L-phenylalanyl-L-alpha-aminoacyl-[protein] + tRNA(Phe). In terms of biological role, functions in the N-end rule pathway of protein degradation where it conjugates Leu, Phe and, less efficiently, Met from aminoacyl-tRNAs to the N-termini of proteins containing an N-terminal arginine or lysine. The sequence is that of Leucyl/phenylalanyl-tRNA--protein transferase from Shewanella pealeana (strain ATCC 700345 / ANG-SQ1).